We begin with the raw amino-acid sequence, 856 residues long: Probable alpha,alpha-trehalose-phosphate synthase [UDP-forming] 8 (856 aa).

The residue at position 5 (Ser-5) is a Phosphoserine. Thr-32 carries the post-translational modification Phosphothreonine. The tract at residues 57–541 (ERKIIVANML…AKSFMQDLER (485 aa)) is glycosyltransferase.

This sequence in the N-terminal section; belongs to the glycosyltransferase 20 family. The protein in the C-terminal section; belongs to the trehalose phosphatase family. Expressed in leaves, roots, stems and flowers.

The enzyme catalyses D-glucose 6-phosphate + UDP-alpha-D-glucose = alpha,alpha-trehalose 6-phosphate + UDP + H(+). This Arabidopsis thaliana (Mouse-ear cress) protein is Probable alpha,alpha-trehalose-phosphate synthase [UDP-forming] 8 (TPS8).